An 89-amino-acid chain; its full sequence is Small ribosomal subunit protein uS19 (89 aa).

Belongs to the universal ribosomal protein uS19 family.

Functionally, protein S19 forms a complex with S13 that binds strongly to the 16S ribosomal RNA. This is Small ribosomal subunit protein uS19 from Phocaeicola vulgatus (strain ATCC 8482 / DSM 1447 / JCM 5826 / CCUG 4940 / NBRC 14291 / NCTC 11154) (Bacteroides vulgatus).